Reading from the N-terminus, the 225-residue chain is E3 ubiquitin-protein ligase ATL76 (225 aa).

A helical transmembrane segment spans residues 59-79; it reads LMLLSVLICGIICCLGLHYII. The segment at 135 to 177 adopts an RING-type; atypical zinc-finger fold; the sequence is CVICLSDFVSGEQLRLLPKCNHGFHVRCIDKWLQHHLTCPKCR.

Belongs to the RING-type zinc finger family. ATL subfamily.

The protein resides in the membrane. It catalyses the reaction S-ubiquitinyl-[E2 ubiquitin-conjugating enzyme]-L-cysteine + [acceptor protein]-L-lysine = [E2 ubiquitin-conjugating enzyme]-L-cysteine + N(6)-ubiquitinyl-[acceptor protein]-L-lysine.. It functions in the pathway protein modification; protein ubiquitination. Its function is as follows. E3 ubiquitin-protein ligase able to catalyze polyubiquitination with ubiquitin-conjugating enzyme E2 UBC8 in vitro. This Arabidopsis thaliana (Mouse-ear cress) protein is E3 ubiquitin-protein ligase ATL76 (ATL76).